The following is a 166-amino-acid chain: uncharacterized protein (166 aa).

The segment covering 73–88 has biased composition (low complexity); that stretch reads SKLNNNNNSNNNNKMA. Disordered stretches follow at residues 73-101 and 126-166; these read SKLN…EKDK and PQSS…EFNN. The span at 89–101 shows a compositional bias: basic and acidic residues; it reads VDNKDNKDNEKDK. A compositionally biased stretch (low complexity) spans 134–154; it reads SPTHKSPSSSPKTISPVKVSP. Residues 155–166 show a composition bias toward polar residues; the sequence is TSSPIKNPEFNN.

This is an uncharacterized protein from Dictyostelium discoideum (Social amoeba).